Here is a 406-residue protein sequence, read N- to C-terminus: Putative sodium-coupled neutral amino acid transporter 11 (406 aa).

Residues 1 to 7 are Cytoplasmic-facing; sequence MKQAGFP. The helical transmembrane segment at 8 to 28 threads the bilayer; it reads LGILLLFWVSYVTDFSLVLLI. An N-linked (GlcNAc...) asparagine glycan is attached at N44. Transmembrane regions (helical) follow at residues 48–68, 93–113, 121–141, 156–176, 202–222, and 241–263; these read GFPG…IAMI, VFIG…LPLS, LGKV…IVMA, AWVF…FAFI, MSIV…YLTF, and VTFG…CFVT. N275 carries an N-linked (GlcNAc...) asparagine glycan. The next 3 membrane-spanning stretches (helical) occupy residues 279 to 299, 301 to 321, and 340 to 360; these read VFHI…SLLI, CLGI…IFII, and IMSC…FVMA.

The protein belongs to the amino acid/polyamine transporter 2 family.

It localises to the membrane. In terms of biological role, putative sodium-dependent amino acid/proton antiporter. The chain is Putative sodium-coupled neutral amino acid transporter 11 (SLC38A11) from Homo sapiens (Human).